We begin with the raw amino-acid sequence, 392 residues long: Chaperone protein DnaJ (392 aa).

Residues 2-67 (DYYSILGISK…QKRDSYDRFG (66 aa)) enclose the J domain. Residues 148 to 226 (GVEKELVVSG…CRGQGRVKDK (79 aa)) form a CR-type zinc finger. Zn(2+)-binding residues include Cys161, Cys164, Cys178, Cys181, Cys200, Cys203, Cys214, and Cys217. 4 CXXCXGXG motif repeats span residues 161–168 (CETCSGQG), 178–185 (CERCKGSG), 200–207 (CPECGGEG), and 214–221 (CSSCRGQG).

Belongs to the DnaJ family. Homodimer. The cofactor is Zn(2+).

It localises to the cytoplasm. In terms of biological role, participates actively in the response to hyperosmotic and heat shock by preventing the aggregation of stress-denatured proteins and by disaggregating proteins, also in an autonomous, DnaK-independent fashion. Unfolded proteins bind initially to DnaJ; upon interaction with the DnaJ-bound protein, DnaK hydrolyzes its bound ATP, resulting in the formation of a stable complex. GrpE releases ADP from DnaK; ATP binding to DnaK triggers the release of the substrate protein, thus completing the reaction cycle. Several rounds of ATP-dependent interactions between DnaJ, DnaK and GrpE are required for fully efficient folding. Also involved, together with DnaK and GrpE, in the DNA replication of plasmids through activation of initiation proteins. This Chlamydia pneumoniae (Chlamydophila pneumoniae) protein is Chaperone protein DnaJ.